The following is a 78-amino-acid chain: Delta-conotoxin-like TxMKLT1-0111 (78 aa).

A signal peptide spans 1–22 (MKLTCMMIVAVLFLTAWTFATA). The propeptide occupies 23 to 49 (DDSGNGLENLFSNAHHQMKNPEASKLN). Disulfide bonds link Cys53-Cys68, Cys60-Cys72, and Cys67-Cys77.

The protein belongs to the conotoxin O1 superfamily. Expressed by the venom duct.

It localises to the secreted. In terms of biological role, delta-conotoxins bind to site 6 of voltage-gated sodium channels (Nav) and inhibit the inactivation process. The protein is Delta-conotoxin-like TxMKLT1-0111 of Conus textile (Cloth-of-gold cone).